The chain runs to 577 residues: Cytochrome P450 714D1 (577 aa).

Topologically, residues 1-3 (MES) are lumenal. The chain crosses the membrane as a helical; Signal-anchor for type III membrane protein span at residues 4 to 24 (FFVFFTAAALPVVVAAAVIAG). Residues 25–577 (LCITAAWLAR…STAPVHSSHN (553 aa)) lie on the Cytoplasmic side of the membrane. The tract at residues 315–343 (REHGGKAAPPSPPERDFLGSIIENSGGQP) is disordered. C504 serves as a coordination point for heme.

It belongs to the cytochrome P450 family. The cofactor is heme. Expressed in rapidly elongating or dividing tissues, including the shoot apical meristem, the intercalary meristem and elongating zones of internodes, and panicle but not in young seedlings, roots and leaves. During the heading stage, the highest expression is detected in the flowering spikelets, anthers, the divisional zone and the node of the uppermost internode.

It is found in the endoplasmic reticulum membrane. Functionally, catalyzes the 16alpha,17-epoxidation on non-13-hydroxylated gibberellins (GAs), including GA4, GA9, and GA12. No activity with GA1, GA20, GA53 or ent-kaurenoic acid. Reduces the biological activity of GAs. This Oryza sativa subsp. japonica (Rice) protein is Cytochrome P450 714D1 (CYP714D1).